The primary structure comprises 842 residues: Probable vinculin (842 aa).

Positions 585 to 679 (KEARKRLDDV…AAEEEERKRA (95 aa)) form a coiled coil.

This sequence belongs to the vinculin/alpha-catenin family. In terms of assembly, monomer. Associates with F-actin. Interacts with aarA, ctxA, ctxB and rgaA. As to expression, epithelium.

The protein resides in the cytoplasm. Its subcellular location is the cell cortex. It is found in the cell junction. Its function is as follows. Involved in cell adhesion. Thought to play an important role in cytokinesis B, probably by providing substrate adhesion and traction forces. Required to organize and polarize the tip epithelium during cytokinesis. Required for the normal distribution of myosin in the tip epithelium. Involved in the localization of ctxA, ctxB, dcsA, exoc6 and rgaA. Thought to form a complex with ctxA, ctxB, and rgaA which regulates myosin accumulation to the apical plasma membrane. This Dictyostelium discoideum (Social amoeba) protein is Probable vinculin (ctnnA).